The chain runs to 171 residues: Large ribosomal subunit protein bL17 (171 aa).

Positions 130–171 are disordered; the sequence is PGYKKSKGKKATKAKGKKAKATPAAEAAAAATTEAAPAEEKK. The span at 133-149 shows a compositional bias: basic residues; the sequence is KKSKGKKATKAKGKKAK. Residues 150–165 show a composition bias toward low complexity; it reads ATPAAEAAAAATTEAA.

This sequence belongs to the bacterial ribosomal protein bL17 family. In terms of assembly, part of the 50S ribosomal subunit. Contacts protein L32.

The protein is Large ribosomal subunit protein bL17 of Opitutus terrae (strain DSM 11246 / JCM 15787 / PB90-1).